A 247-amino-acid polypeptide reads, in one-letter code: MADS-box transcription factor 1 (247 aa).

An MADS-box domain is found at 1–61 (MGRGRVELKR…GKLYEFCSTS (61 aa)). The K-box domain occupies 91 to 181 (ELSSQQEYLK…RQRMEGYQIN (91 aa)).

In terms of tissue distribution, expressed abundantly in the seed coat and to lesser extent in young buds, carpels, petals, and stamen.

It localises to the nucleus. Probable transcription factor. This chain is MADS-box transcription factor 1, found in Pisum sativum (Garden pea).